Here is a 599-residue protein sequence, read N- to C-terminus: Aspartate--tRNA(Asp/Asn) ligase (599 aa).

E169 serves as a coordination point for L-aspartate. The tract at residues 193–196 (QLFK) is aspartate. R215 provides a ligand contact to L-aspartate. Residues 215-217 (RDE) and Q224 contribute to the ATP site. H447 is an L-aspartate binding site. E481 provides a ligand contact to ATP. R488 provides a ligand contact to L-aspartate. 533–536 (GWDR) is a binding site for ATP.

It belongs to the class-II aminoacyl-tRNA synthetase family. Type 1 subfamily. As to quaternary structure, homodimer.

The protein resides in the cytoplasm. It carries out the reaction tRNA(Asx) + L-aspartate + ATP = L-aspartyl-tRNA(Asx) + AMP + diphosphate. Aspartyl-tRNA synthetase with relaxed tRNA specificity since it is able to aspartylate not only its cognate tRNA(Asp) but also tRNA(Asn). Reaction proceeds in two steps: L-aspartate is first activated by ATP to form Asp-AMP and then transferred to the acceptor end of tRNA(Asp/Asn). In Pseudarthrobacter chlorophenolicus (strain ATCC 700700 / DSM 12829 / CIP 107037 / JCM 12360 / KCTC 9906 / NCIMB 13794 / A6) (Arthrobacter chlorophenolicus), this protein is Aspartate--tRNA(Asp/Asn) ligase.